The primary structure comprises 212 residues: Redox-sensing transcriptional repressor Rex (212 aa).

The segment at residues 17–56 (LYARSLRYLLEEGVHSVSSQELGERINVTAAQIRKDLSYF) is a DNA-binding region (H-T-H motif). 91 to 96 (GIGLLG) is an NAD(+) binding site.

The protein belongs to the transcriptional regulatory Rex family. In terms of assembly, homodimer.

Its subcellular location is the cytoplasm. Its function is as follows. Modulates transcription in response to changes in cellular NADH/NAD(+) redox state. This Chloroflexus aurantiacus (strain ATCC 29366 / DSM 635 / J-10-fl) protein is Redox-sensing transcriptional repressor Rex.